A 78-amino-acid polypeptide reads, in one-letter code: uncharacterized protein (78 aa).

The N-terminal stretch at 1 to 27 (MQNSKTDMCAALWAVTGLVLNVAVRFA) is a signal peptide.

This is an uncharacterized protein from Dryophytes versicolor (chameleon treefrog).